A 175-amino-acid polypeptide reads, in one-letter code: MPLRPGRCYRHFSGPAYTRKEYIPGVPQPKITKFTMGDHKKDYDFEVRLLTKQIGQIRHNALEAARVIALKQMTSMVGNETDFYLYVTKYPHHVIRENKMMAFAGADRLQDGMRLSFGKPIGTAARITKLGDLIMAIRVKKEHLEFAKKAFKVASSKLPLDTEIVVVPLKEEKTQ.

Belongs to the universal ribosomal protein uL16 family.

The sequence is that of Large ribosomal subunit protein uL16 from Metallosphaera sedula (strain ATCC 51363 / DSM 5348 / JCM 9185 / NBRC 15509 / TH2).